A 123-amino-acid polypeptide reads, in one-letter code: Fluoride-specific ion channel FluC (123 aa).

4 consecutive transmembrane segments (helical) span residues 7–27 (LLLI…SGIL), 39–59 (LVNS…FFGF), 67–87 (IFLG…SYET), and 100–120 (FMNV…GFIL). Na(+)-binding residues include Gly-75 and Ser-78.

The protein belongs to the fluoride channel Fluc/FEX (TC 1.A.43) family.

The protein resides in the cell membrane. It catalyses the reaction fluoride(in) = fluoride(out). With respect to regulation, na(+) is not transported, but it plays an essential structural role and its presence is essential for fluoride channel function. Fluoride-specific ion channel. Important for reducing fluoride concentration in the cell, thus reducing its toxicity. This chain is Fluoride-specific ion channel FluC, found in Pyrococcus abyssi (strain GE5 / Orsay).